The sequence spans 230 residues: Large ribosomal subunit protein uL4 (230 aa).

Residues Arg-51–Arg-105 are disordered.

This sequence belongs to the universal ribosomal protein uL4 family. As to quaternary structure, part of the 50S ribosomal subunit.

In terms of biological role, one of the primary rRNA binding proteins, this protein initially binds near the 5'-end of the 23S rRNA. It is important during the early stages of 50S assembly. It makes multiple contacts with different domains of the 23S rRNA in the assembled 50S subunit and ribosome. Functionally, forms part of the polypeptide exit tunnel. The chain is Large ribosomal subunit protein uL4 from Mycobacterium leprae (strain Br4923).